The sequence spans 466 residues: Gamma-aminobutyric acid receptor subunit gamma-2 (466 aa).

Residues 1–38 (MSSPNTWSTGSTVYSPVFSQKMTLWILLLLSLYPGFTS) form the signal peptide. The Extracellular segment spans residues 39 to 274 (QKSDDDYEDY…FDLSRRMGYF (236 aa)). Residues asparagine 51 and asparagine 128 are each glycosylated (N-linked (GlcNAc...) asparagine). A disulfide bond links cysteine 189 and cysteine 203. Asparagine 246 carries N-linked (GlcNAc...) asparagine glycosylation. A helical transmembrane segment spans residues 275–295 (TIQTYIPCTLIVVLSWVSFWI). The Cytoplasmic segment spans residues 296–301 (NKDAVP). The helical transmembrane segment at 302–321 (ARTSLGITTVLTMTTLSTIA) threads the bilayer. Residues 322–333 (RKSLPKVSYVTA) are Extracellular-facing. The helical transmembrane segment at 334 to 358 (MDLFVSVCFIFVFSALVEYGTLHYF) threads the bilayer. Topologically, residues 359-442 (VSNRKPSKDK…IHIRIAKMDS (84 aa)) are cytoplasmic. The helical transmembrane segment at 443–463 (YARIFFPTAFCLFNLVYWVSY) threads the bilayer. Residues 464–466 (LYL) lie on the Extracellular side of the membrane.

Belongs to the ligand-gated ion channel (TC 1.A.9) family. Gamma-aminobutyric acid receptor (TC 1.A.9.5) subfamily. GABRG2 sub-subfamily. Heteropentamer, formed by a combination of alpha (GABRA1-6), beta (GABRB1-3), gamma (GABRG1-3), delta (GABRD), epsilon (GABRE), rho (GABRR1-3), pi (GABRP) and theta (GABRQ) chains, each subunit exhibiting distinct physiological and pharmacological properties. Interacts with GABARAP. Interacts with KIF21B. Identified in a complex of 720 kDa composed of LHFPL4, NLGN2, GABRA1, GABRB2, GABRG2 and GABRB3. Interacts with LHFPL4. Interacts with SHISA7; interaction leads to the regulation of GABA(A) receptor trafficking, channel deactivation kinetics and pharmacology. Post-translationally, palmitoylated by ZDHHC3/GODZ; required for the accumulation of GABA(A) receptors at the postsynaptic membrane of inhibitory GABAergic synapses. Glycosylated. Expressed in brain (at protein level). Expressed in lungs, in alveolar epithelium.

The protein localises to the postsynaptic cell membrane. Its subcellular location is the cell membrane. The protein resides in the cell projection. It is found in the dendrite. It localises to the cytoplasmic vesicle membrane. The enzyme catalyses chloride(in) = chloride(out). Allosterically activated by benzodiazepines. Activated by pentobarbital. Inhibited by the antagonist bicuculline. Inhibited by zinc ions. Potentiated by histamine. In terms of biological role, gamma subunit of the heteropentameric ligand-gated chloride channel gated by gamma-aminobutyric acid (GABA), a major inhibitory neurotransmitter in the brain. GABA-gated chloride channels, also named GABA(A) receptors (GABAAR), consist of five subunits arranged around a central pore and contain GABA active binding site(s) located at the alpha and beta subunit interface(s). When activated by GABA, GABAARs selectively allow the flow of chloride anions across the cell membrane down their electrochemical gradient. Gamma-2/GABRG2-containing GABAARs are found at both synaptic and extrasynaptic sites. Chloride influx into the postsynaptic neuron following GABAAR opening decreases the neuron ability to generate a new action potential, thereby reducing nerve transmission. GABAARs containing alpha-1 and beta-2 or -3 subunits exhibit synaptogenic activity; the gamma-2 subunit being necessary but not sufficient to induce rapid synaptic contacts formation. Extrasynaptic gamma-2-containing receptors contribute to the tonic GABAergic inhibition. GABAARs function also as histamine receptor where histamine binds at the interface of two neighboring beta subunits and potentiates GABA response in a gamma-2 subunit-controlled manner. The chain is Gamma-aminobutyric acid receptor subunit gamma-2 from Rattus norvegicus (Rat).